The chain runs to 424 residues: Tryptophan synthase beta chain (424 aa).

Residue K108 is modified to N6-(pyridoxal phosphate)lysine.

This sequence belongs to the TrpB family. As to quaternary structure, tetramer of two alpha and two beta chains. Requires pyridoxal 5'-phosphate as cofactor.

It catalyses the reaction (1S,2R)-1-C-(indol-3-yl)glycerol 3-phosphate + L-serine = D-glyceraldehyde 3-phosphate + L-tryptophan + H2O. It participates in amino-acid biosynthesis; L-tryptophan biosynthesis; L-tryptophan from chorismate: step 5/5. Functionally, the beta subunit is responsible for the synthesis of L-tryptophan from indole and L-serine. The chain is Tryptophan synthase beta chain (trpB) from Thermoplasma acidophilum (strain ATCC 25905 / DSM 1728 / JCM 9062 / NBRC 15155 / AMRC-C165).